A 150-amino-acid polypeptide reads, in one-letter code: MTNLFVRSGISFVDRSEVLTHIGNEMLAKGVVHDTWPQALIAREAEFPTGIMLEQHAIAIPHCEAIHAKSSAIYLLRPTNKVHFQQADDDNDVAVSLVIALIVENPQQQLKLLRCLFGKLQQPDIVETLITLPETQLKEYFTKYVLDSDE.

Residues 1–144 (MTNLFVRSGI…TQLKEYFTKY (144 aa)) enclose the PTS EIIA type-2 domain. Catalysis depends on His-62, which acts as the Tele-phosphohistidine intermediate. His-62 carries the phosphohistidine; by HPr modification.

As to quaternary structure, forms a complex with one each of subunit of GatA, GatB and 2 subunits of GatC.

The protein resides in the cytoplasm. In terms of biological role, the phosphoenolpyruvate-dependent sugar phosphotransferase system (sugar PTS), a major carbohydrate active transport system, catalyzes the phosphorylation of incoming sugar substrates concomitantly with their translocation across the cell membrane. The enzyme II complex composed of GatA, GatB and GatC is involved in galactitol transport. The sequence is that of PTS system galactitol-specific EIIA component (gatA) from Escherichia coli O157:H7.